The sequence spans 378 residues: Putative glutamate--cysteine ligase 2 (378 aa).

It belongs to the glutamate--cysteine ligase type 2 family. YbdK subfamily.

The catalysed reaction is L-cysteine + L-glutamate + ATP = gamma-L-glutamyl-L-cysteine + ADP + phosphate + H(+). In terms of biological role, ATP-dependent carboxylate-amine ligase which exhibits weak glutamate--cysteine ligase activity. The sequence is that of Putative glutamate--cysteine ligase 2 from Bdellovibrio bacteriovorus (strain ATCC 15356 / DSM 50701 / NCIMB 9529 / HD100).